Reading from the N-terminus, the 385-residue chain is Probable alpha-galactosidase (385 aa).

Residues 1 to 19 form the signal peptide; sequence MMKIAATLLATIALATVNA. 2 disulfides stabilise this stretch: Cys40–Cys72 and Cys119–Cys149. Asp147 acts as the Nucleophile in catalysis. 180 to 184 contacts substrate; it reads DWGYE. Residue Asp202 is the Proton donor of the active site.

It belongs to the glycosyl hydrolase 27 family.

It carries out the reaction Hydrolysis of terminal, non-reducing alpha-D-galactose residues in alpha-D-galactosides, including galactose oligosaccharides, galactomannans and galactolipids.. The chain is Probable alpha-galactosidase (melA) from Dictyostelium discoideum (Social amoeba).